Consider the following 603-residue polypeptide: Proline--tRNA ligase (603 aa).

Belongs to the class-II aminoacyl-tRNA synthetase family. ProS type 1 subfamily. As to quaternary structure, homodimer.

The protein localises to the cytoplasm. It carries out the reaction tRNA(Pro) + L-proline + ATP = L-prolyl-tRNA(Pro) + AMP + diphosphate. Catalyzes the attachment of proline to tRNA(Pro) in a two-step reaction: proline is first activated by ATP to form Pro-AMP and then transferred to the acceptor end of tRNA(Pro). As ProRS can inadvertently accommodate and process non-cognate amino acids such as alanine and cysteine, to avoid such errors it has two additional distinct editing activities against alanine. One activity is designated as 'pretransfer' editing and involves the tRNA(Pro)-independent hydrolysis of activated Ala-AMP. The other activity is designated 'posttransfer' editing and involves deacylation of mischarged Ala-tRNA(Pro). The misacylated Cys-tRNA(Pro) is not edited by ProRS. The protein is Proline--tRNA ligase of Arthrobacter sp. (strain FB24).